Reading from the N-terminus, the 258-residue chain is 14-3-3-like protein F (258 aa).

This sequence belongs to the 14-3-3 family.

In Nicotiana tabacum (Common tobacco), this protein is 14-3-3-like protein F.